A 164-amino-acid polypeptide reads, in one-letter code: UPF0114 protein YqhA (164 aa).

3 helical membrane-spanning segments follow: residues 15–35 (LLAP…LKFF), 53–73 (LILV…LVMV), and 136–156 (LMWY…MGYL).

Belongs to the UPF0114 family.

The protein localises to the cell membrane. The sequence is that of UPF0114 protein YqhA from Escherichia coli O139:H28 (strain E24377A / ETEC).